The primary structure comprises 263 residues: Glucosamine-6-phosphate deaminase (263 aa).

The active-site Proton acceptor; for enolization step is aspartate 72. The active-site For ring-opening step is aspartate 141. The Proton acceptor; for ring-opening step role is filled by histidine 143. The active-site For ring-opening step is glutamate 148.

Belongs to the glucosamine/galactosamine-6-phosphate isomerase family. NagB subfamily.

It catalyses the reaction alpha-D-glucosamine 6-phosphate + H2O = beta-D-fructose 6-phosphate + NH4(+). It functions in the pathway amino-sugar metabolism; N-acetylneuraminate degradation; D-fructose 6-phosphate from N-acetylneuraminate: step 5/5. With respect to regulation, allosterically activated by N-acetylglucosamine 6-phosphate (GlcNAc6P). Catalyzes the reversible isomerization-deamination of glucosamine 6-phosphate (GlcN6P) to form fructose 6-phosphate (Fru6P) and ammonium ion. The sequence is that of Glucosamine-6-phosphate deaminase from Porphyromonas gingivalis (strain ATCC 33277 / DSM 20709 / CIP 103683 / JCM 12257 / NCTC 11834 / 2561).